Consider the following 440-residue polypeptide: uncharacterized protein (440 aa).

Residues 1–17 form the signal peptide; that stretch reads MDRFFCTVWVWSVLFGA. Cysteine 18 is lipidated: N-palmitoyl cysteine. A lipid anchor (S-diacylglycerol cysteine) is attached at cysteine 18. The tract at residues 241 to 268 is disordered; the sequence is SALQERPSSPEPVVSTIPSPEGEENSAA.

It is found in the cell membrane. This is an uncharacterized protein from Treponema pallidum (strain Nichols).